The chain runs to 322 residues: Deoxyhypusine hydroxylase (322 aa).

HEAT-like PBS-type repeat units lie at residues 76-102 (LKHE…VMLD), 109-135 (VRHE…SRRE), 234-260 (FKHE…VLKR), and 267-293 (VRHE…HLQD). The Fe cation site is built by His-78, Glu-79, His-111, Glu-112, His-236, Glu-237, His-269, and Glu-270.

The protein belongs to the deoxyhypusine hydroxylase family. Fe(2+) serves as cofactor.

The protein localises to the cytoplasm. It localises to the nucleus. The enzyme catalyses [eIF5A protein]-deoxyhypusine + AH2 + O2 = [eIF5A protein]-hypusine + A + H2O. The protein operates within protein modification; eIF5A hypusination. Functionally, catalyzes the hydroxylation of the N(6)-(4-aminobutyl)-L-lysine intermediate to form hypusine, an essential post-translational modification only found in mature eIF-5A factor. In Eremothecium gossypii (strain ATCC 10895 / CBS 109.51 / FGSC 9923 / NRRL Y-1056) (Yeast), this protein is Deoxyhypusine hydroxylase.